The following is a 218-amino-acid chain: Cytidylate kinase (218 aa).

ATP is bound at residue 21–29 (GPAASGKGT).

This sequence belongs to the cytidylate kinase family. Type 1 subfamily.

It localises to the cytoplasm. The catalysed reaction is CMP + ATP = CDP + ADP. It carries out the reaction dCMP + ATP = dCDP + ADP. In Rickettsia canadensis (strain McKiel), this protein is Cytidylate kinase.